The following is a 631-amino-acid chain: Coiled-coil domain-containing protein 93 (631 aa).

Disordered stretches follow at residues 1–23 (MGLP…DEEQ) and 214–243 (QSKM…HEED). Positions 1–430 (MGLPRGPEGQ…LKAERAPRGD (430 aa)) are sufficient for interaction with CCDC22. A compositionally biased stretch (basic and acidic residues) spans 215–225 (SKMEKAEDKKT). Phosphoserine occurs at positions 298, 301, and 305. A coiled-coil region spans residues 309–631 (LGTSQLHRRK…LLSKVKAKAS (323 aa)). The segment covering 421–433 (LKAERAPRGDEKT) has biased composition (basic and acidic residues). Residues 421-447 (LKAERAPRGDEKTLSSGEPPGTLTSAM) form a disordered region. Residues 448 to 631 (THDEDLDRRY…LLSKVKAKAS (184 aa)) are sufficient for interaction with WASHC2C.

Belongs to the CCDC93 family. In terms of assembly, component of the commander complex consisting of the CCC subcomplex and the retriever subcomplex. Component of the CCC (COMMD/CCDC22/CCDC93) subcomplex consisting of COMMD1, COMMD2, COMMD3, COMMD4, COMMD5, COMMD6, COMMD7, COMMD8, COMMD9, COMMD10, CCDC22 and CCDC93. Forms a coiled-coil heterodimer with CCDC22; this heterodimer interacts with the guanine nucleotide exchange factor DENND10; the interaction is direct. Interacts with WASHC1. Interacts directly with WASHC2C. Interacts with SNX17 and SNX31.

The protein resides in the early endosome. Functionally, component of the commander complex that is essential for endosomal recycling of transmembrane cargos; the commander complex is composed of composed of the CCC subcomplex and the retriever subcomplex. Component of the CCC complex, which is involved in the regulation of endosomal recycling of surface proteins, including integrins, signaling receptor and channels. The CCC complex associates with SNX17, retriever and WASH complexes to prevent lysosomal degradation and promote cell surface recycling of numerous cargos such as integrins ITGA5:ITGB1. Involved in copper-dependent ATP7A trafficking between the trans-Golgi network and vesicles in the cell periphery; the function is proposed to depend on its association within the CCC complex and cooperation with the WASH complex on early endosomes and is dependent on its interaction with WASHC2C. (Microbial infection) The CCC complex, in collaboration with the heterotrimeric retriever complex, mediates the exit of human papillomavirus to the cell surface. In Homo sapiens (Human), this protein is Coiled-coil domain-containing protein 93 (CCDC93).